A 349-amino-acid chain; its full sequence is Protein-glutamate methylesterase/protein-glutamine glutaminase (349 aa).

The Response regulatory domain maps to 5–122; it reads RVLSVDDSAL…REGMLAYSEM (118 aa). 4-aspartylphosphate is present on D56. The region spanning 152-344 is the CheB-type methylesterase domain; it reads LLSSEKLIAI…QQMLAKISAG (193 aa). Catalysis depends on residues S164, H190, and D286.

The protein belongs to the CheB family. Post-translationally, phosphorylated by CheA. Phosphorylation of the N-terminal regulatory domain activates the methylesterase activity.

Its subcellular location is the cytoplasm. It carries out the reaction [protein]-L-glutamate 5-O-methyl ester + H2O = L-glutamyl-[protein] + methanol + H(+). The enzyme catalyses L-glutaminyl-[protein] + H2O = L-glutamyl-[protein] + NH4(+). Involved in chemotaxis. Part of a chemotaxis signal transduction system that modulates chemotaxis in response to various stimuli. Catalyzes the demethylation of specific methylglutamate residues introduced into the chemoreceptors (methyl-accepting chemotaxis proteins or MCP) by CheR. Also mediates the irreversible deamidation of specific glutamine residues to glutamic acid. This is Protein-glutamate methylesterase/protein-glutamine glutaminase from Escherichia coli O157:H7.